The primary structure comprises 283 residues: Protein MGARP (283 aa).

The interval 1 to 36 (MYLRRAVSKTLALPRRAPPGPAPLGKDASLRRMSSR) is disordered. Residues 1–41 (MYLRRAVSKTLALPRRAPPGPAPLGKDASLRRMSSRKFPGT) lie on the Cytoplasmic side of the membrane. Residues 42–64 (SGSNMIYYLVVGVTVSAGGYYTY) traverse the membrane as a helical; Anchor for type IV membrane protein segment. Over 65–283 (KALTSKQVRR…VTEETASPQG (219 aa)) the chain is Mitochondrial intermembrane. 2 disordered regions span residues 78–101 (VAEPKEQTKAELQPLPGEKEEHVA) and 118–283 (AESV…SPQG). Positions 128–160 (EAAVVLPEESQASAPSEVPAEAAVVEASLSSSE) are enriched in low complexity. Polar residues-rich tracts occupy residues 171–184 (VETTESVPESTQEV) and 199–220 (ADTSQEGADTSQEGADTSQEGA). Basic and acidic residues predominate over residues 221 to 245 (DTTKEEADNSKEAEGTTTEDPRSIS).

Interacts with RHOT1/Miro-1, RHOT2/Miro-2, TRAK1/OIP106 and TRAK2/GRIF1. In terms of tissue distribution, expressed in the ovary, testis, brain, adrenal glands and the compartments of the visual nervous system. Expressed in corneal endothelium (CE) (at protein level). Expressed in steroidogenic tissues with the highest level of expression observed in the adrenal gland. Weakly expressed in placenta. Weakly expressed in astrocytes and neurons under normoxia. Strongly expressed in astrocytes and neurons under hypoxia. Expressed in each layer of the retina, with particularly higher staining in the inner segment of the photoreceptor (IS), the outer plexiform layer (OPL) and the ganglion cell layer (GCL).

It localises to the mitochondrion. The protein localises to the mitochondrion outer membrane. It is found in the mitochondrion inner membrane. Functionally, plays a role in the trafficking of mitochondria along microtubules. Regulates the kinesin-mediated axonal transport of mitochondria to nerve terminals along microtubules during hypoxia. Participates in the translocation of TRAK2/GRIF1 from the cytoplasm to the mitochondrion. Also plays a role in steroidogenesis through maintenance of mitochondrial abundance and morphology. Plays an inhibitory role during neocortex development by regulating mitochondrial morphology, distribution and motility in neocortical neurons. The protein is Protein MGARP (Mgarp) of Mus musculus (Mouse).